Here is a 188-residue protein sequence, read N- to C-terminus: MSQAPGAQPSPPTVYHERQRLELCAVHALNNVLQQQLFSQEAADEICKRLAPDSRLNPHRSLLGTGNYDVNVIMAALQGLGLAAVWWDRRRPLSQLALPQVLGLILNLPSPVSLGLLSLPLRRRHWVALRQVDGVYYNLDSKLRAPEALGDEDGVRAFLAAALAQGLCEVLLVVTKEVEEKGSWLRTD.

A Josephin domain is found at 11–188; it reads PPTVYHERQR…EEKGSWLRTD (178 aa). The Nucleophile role is filled by C24. The active-site Proton acceptor is H125.

It localises to the cytoplasm. The protein localises to the cytosol. It catalyses the reaction Thiol-dependent hydrolysis of ester, thioester, amide, peptide and isopeptide bonds formed by the C-terminal Gly of ubiquitin (a 76-residue protein attached to proteins as an intracellular targeting signal).. Cleaves 'Lys-63'-linked poly-ubiquitin chains, and with lesser efficiency 'Lys-48'-linked poly-ubiquitin chains (in vitro). May act as a deubiquitinating enzyme. The polypeptide is Josephin-2 (JOSD2) (Homo sapiens (Human)).